Reading from the N-terminus, the 505-residue chain is Catalase (505 aa).

Active-site residues include His56 and Asn129. Position 339 (Tyr339) interacts with heme.

This sequence belongs to the catalase family. The cofactor is heme.

It is found in the cytoplasm. It carries out the reaction 2 H2O2 = O2 + 2 H2O. Its function is as follows. Decomposes hydrogen peroxide into water and oxygen; serves to protect cells from the toxic effects of hydrogen peroxide. The protein is Catalase (katA) of Helicobacter pylori (strain J99 / ATCC 700824) (Campylobacter pylori J99).